The sequence spans 208 residues: Pyridoxine/pyridoxamine 5'-phosphate oxidase (208 aa).

Residues 55–60, 70–71, lysine 76, lysine 77, and glutamine 99 each bind FMN; these read RMVLLK and YT. Lysine 60 lines the substrate pocket. Residues tyrosine 117, arginine 121, and serine 125 each coordinate substrate. FMN-binding positions include 134-135 and tryptophan 179; that span reads QS. 185-187 lines the substrate pocket; that stretch reads RLH. Residue arginine 189 coordinates FMN.

It belongs to the pyridoxamine 5'-phosphate oxidase family. Homodimer. Requires FMN as cofactor.

The catalysed reaction is pyridoxamine 5'-phosphate + O2 + H2O = pyridoxal 5'-phosphate + H2O2 + NH4(+). It catalyses the reaction pyridoxine 5'-phosphate + O2 = pyridoxal 5'-phosphate + H2O2. The protein operates within cofactor metabolism; pyridoxal 5'-phosphate salvage; pyridoxal 5'-phosphate from pyridoxamine 5'-phosphate: step 1/1. It functions in the pathway cofactor metabolism; pyridoxal 5'-phosphate salvage; pyridoxal 5'-phosphate from pyridoxine 5'-phosphate: step 1/1. Catalyzes the oxidation of either pyridoxine 5'-phosphate (PNP) or pyridoxamine 5'-phosphate (PMP) into pyridoxal 5'-phosphate (PLP). This is Pyridoxine/pyridoxamine 5'-phosphate oxidase from Brucella abortus biovar 1 (strain 9-941).